We begin with the raw amino-acid sequence, 152 residues long: Protein IpgF (152 aa).

Positions 1-17 (MSRFVFILLCFIPHLGR) are cleaved as a signal peptide.

It belongs to the IagB/IpgF/P19 family.

The polypeptide is Protein IpgF (ipgF) (Shigella flexneri).